The primary structure comprises 151 residues: Small ribosomal subunit protein bS6 (151 aa).

A disordered region spans residues 94 to 151 (EEHEQGPSAMMRKRDDDDRGERGERPRGPRPERGERGERGERGPRRPREDNIGEEGLY). Basic and acidic residues predominate over residues 105-144 (RKRDDDDRGERGERPRGPRPERGERGERGERGPRRPREDN).

It belongs to the bacterial ribosomal protein bS6 family.

In terms of biological role, binds together with bS18 to 16S ribosomal RNA. This is Small ribosomal subunit protein bS6 from Beijerinckia indica subsp. indica (strain ATCC 9039 / DSM 1715 / NCIMB 8712).